A 902-amino-acid chain; its full sequence is Cytosolic 10-formyltetrahydrofolate dehydrogenase (902 aa).

Positions 1 to 310 (MKIAVIGQSL…LASNFFKGAA (310 aa)) are hydrolase domain. Ser-9 is modified (phosphoserine). Residue Lys-38 is modified to N6-succinyllysine. Residue 88–90 (QFI) coordinates (6R)-10-formyltetrahydrofolate. The active-site Proton donor is His-106. Residue Asp-142 participates in (6R)-10-formyltetrahydrofolate binding. The 78-residue stretch at 318–395 (EAELVTAEAV…DFIQLLVRKL (78 aa)) folds into the Carrier domain. At Ser-354 the chain carries O-(pantetheine 4'-phosphoryl)serine. The aldehyde dehydrogenase domain stretch occupies residues 417–902 (TIRIPHQLFI…LRVKTVTFEY (486 aa)). NADP(+) contacts are provided by residues 571–573 (IPW) and 597–600 (KPAQ). Phosphoserine occurs at positions 629 and 631. NADP(+) contacts are provided by residues 630-635 (GSLVGQ) and 650-651 (GS). Lys-660 carries the post-translational modification N6-succinyllysine. Residue Glu-673 is the Proton acceptor of the active site. 673 to 674 (EL) lines the NADP(+) pocket. The Proton donor role is filled by Cys-707. Lys-757 contacts NADP(+). Lys-767 is modified (N6-succinyllysine). 804–806 (ESF) is a binding site for NADP(+). A Phosphoserine modification is found at Ser-825. Lys-882 is subject to N6-acetyllysine.

In the N-terminal section; belongs to the GART family. The protein in the C-terminal section; belongs to the aldehyde dehydrogenase family. ALDH1L subfamily. In terms of assembly, homotetramer. Phosphopantetheinylation at Ser-354 by AASDHPPT is required for the formyltetrahydrofolate dehydrogenase activity.

It is found in the cytoplasm. Its subcellular location is the cytosol. The catalysed reaction is (6R)-10-formyltetrahydrofolate + NADP(+) + H2O = (6S)-5,6,7,8-tetrahydrofolate + CO2 + NADPH + H(+). Functionally, cytosolic 10-formyltetrahydrofolate dehydrogenase that catalyzes the NADP(+)-dependent conversion of 10-formyltetrahydrofolate to tetrahydrofolate and carbon dioxide. May also have an NADP(+)-dependent aldehyde dehydrogenase activity towards formaldehyde, acetaldehyde, propionaldehyde, and benzaldehyde. The polypeptide is Cytosolic 10-formyltetrahydrofolate dehydrogenase (Pongo abelii (Sumatran orangutan)).